The following is a 550-amino-acid chain: Hydroxylamine reductase (550 aa).

Residues Cys3, Cys6, Cys18, and Cys25 each contribute to the [2Fe-2S] cluster site. 8 residues coordinate hybrid [4Fe-2O-2S] cluster: His249, Glu273, Cys317, Cys405, Cys433, Cys458, Glu492, and Lys494. Residue Cys405 is modified to Cysteine persulfide.

Belongs to the HCP family. Requires [2Fe-2S] cluster as cofactor. Hybrid [4Fe-2O-2S] cluster is required as a cofactor.

It localises to the cytoplasm. It carries out the reaction A + NH4(+) + H2O = hydroxylamine + AH2 + H(+). Its function is as follows. Catalyzes the reduction of hydroxylamine to form NH(3) and H(2)O. The sequence is that of Hydroxylamine reductase from Salmonella enteritidis PT4 (strain P125109).